The following is a 148-amino-acid chain: Oleosin 1 (148 aa).

Position 2 is an N-acetylalanine (Ala2). Residues 2–28 (ADQHFQQPLHFQGSYGQQQPRSYQVAK) form a polar region. Residues 29–148 (AATAVTAGGS…HVPSGQQQSS (120 aa)) form a hydrophobic region. Helical transmembrane passes span 37–57 (GSLLVLSGLVLAGTVIALTIA) and 81–101 (GFLTSGGFGVAAVTVLSWIYK).

The protein belongs to the oleosin family.

Its subcellular location is the lipid droplet. The protein resides in the membrane. In terms of biological role, may have a structural role to stabilize the lipid body during desiccation of the seed by preventing coalescence of the oil. Probably interacts with both lipid and phospholipid moieties of lipid bodies. May also provide recognition signals for specific lipase anchorage in lipolysis during seedling growth. This is Oleosin 1 (OLE1) from Prunus dulcis (Almond).